The following is a 215-amino-acid chain: Pyrrolidone-carboxylate peptidase (215 aa).

Residues glutamate 78, cysteine 141, and histidine 165 contribute to the active site.

Belongs to the peptidase C15 family. In terms of assembly, homotetramer.

The protein localises to the cytoplasm. The enzyme catalyses Release of an N-terminal pyroglutamyl group from a polypeptide, the second amino acid generally not being Pro.. Removes 5-oxoproline from various penultimate amino acid residues except L-proline. This chain is Pyrrolidone-carboxylate peptidase, found in Streptococcus pyogenes serotype M18 (strain MGAS8232).